A 63-amino-acid chain; its full sequence is 2-hydroxymuconate tautomerase (63 aa).

The active-site Proton acceptor; via imino nitrogen is the Pro-2.

The protein belongs to the 4-oxalocrotonate tautomerase family. In terms of assembly, homohexamer.

The catalysed reaction is (2Z,4E)-2-hydroxyhexa-2,4-dienedioate = (3E)-2-oxohex-3-enedioate. It functions in the pathway xenobiotic degradation; toluene degradation. The protein operates within xenobiotic degradation; xylene degradation. Catalyzes the ketonization of 2-hydroxymuconate stereoselectively to yield 2-oxo-3-hexenedioate. This Pseudomonas putida (Arthrobacter siderocapsulatus) protein is 2-hydroxymuconate tautomerase (xylH).